A 324-amino-acid chain; its full sequence is MSVSLQSRPTTIACLLGPTASGKTAAALALAARRPIEIVSVDSALVYRDMDIGTAKPTRDERARVPHHLIDIIDPADSYSAASFRADTLRLIGEIAARGNTPLLAGGTMLYYKALTQGLNDLPGADPALRAELDADAARDGWPALHARLARIDPATAARLAPNDAQRIQRALEVCMLSGQPMSALLAAPRAADDAAAAYRFVPVALEPSDRAVLHARIAQRFDAMLEAGFIDEVERLRRREDLHLGLPSMRCVGYRQAWEYLDGAIDYRTMRDKGIFATRQLCKRQITWLRAMPERIVVDCIARDSTAQALDALERVLDGLAAR.

17 to 24 (GPTASGKT) lines the ATP pocket. Residue 19–24 (TASGKT) participates in substrate binding. 4 interaction with substrate tRNA regions span residues 42 to 45 (DSAL), 166 to 170 (QRIQR), 251 to 256 (RCVGYR), and 284 to 291 (KRQITWLR).

Belongs to the IPP transferase family. In terms of assembly, monomer. The cofactor is Mg(2+).

The catalysed reaction is adenosine(37) in tRNA + dimethylallyl diphosphate = N(6)-dimethylallyladenosine(37) in tRNA + diphosphate. In terms of biological role, catalyzes the transfer of a dimethylallyl group onto the adenine at position 37 in tRNAs that read codons beginning with uridine, leading to the formation of N6-(dimethylallyl)adenosine (i(6)A). The sequence is that of tRNA dimethylallyltransferase from Burkholderia vietnamiensis (strain G4 / LMG 22486) (Burkholderia cepacia (strain R1808)).